The chain runs to 156 residues: MPRKGPAPKRPVVADPVYGSPVVSQLVNKILLDGKKGLAERIVYDALEGVSSKSGNDAVATLKKALDNIRPTLEVRSRRVGGSTYQVPVEVKPHRANTLALRWLTSYAKGRREKTMTERLANEILDASNGLGAAVKRREDTHKMAESNKAFAHYRW.

This sequence belongs to the universal ribosomal protein uS7 family. Part of the 30S ribosomal subunit. Contacts proteins S9 and S11.

Its function is as follows. One of the primary rRNA binding proteins, it binds directly to 16S rRNA where it nucleates assembly of the head domain of the 30S subunit. Is located at the subunit interface close to the decoding center, probably blocks exit of the E-site tRNA. In Leifsonia xyli subsp. xyli (strain CTCB07), this protein is Small ribosomal subunit protein uS7.